A 453-amino-acid chain; its full sequence is Ankyrin repeat and SOCS box protein 16 (453 aa).

ANK repeat units lie at residues 56–85 (CRDP…AANM), 110–139 (KQTA…ELDA), 142–171 (GGRA…KANV), 175–204 (EGTT…TVNL), 209–238 (SQET…DVGL), 242–279 (QGET…DARA), and 283–312 (KRHT…RAEV). Residues 398–450 (YSSALCMVNQPRQLQHLARLAVRARLGSRCRQGATRLPLPPLLRDYLLLRVEG) enclose the SOCS box domain.

Belongs to the ankyrin SOCS box (ASB) family.

It participates in protein modification; protein ubiquitination. Functionally, may be a substrate-recognition component of a SCF-like ECS (Elongin-Cullin-SOCS-box protein) E3 ubiquitin-protein ligase complex which mediates the ubiquitination and subsequent proteasomal degradation of target proteins. The polypeptide is Ankyrin repeat and SOCS box protein 16 (ASB16) (Homo sapiens (Human)).